A 138-amino-acid chain; its full sequence is Ribulose bisphosphate carboxylase small subunit (138 aa).

It belongs to the RuBisCO small chain family. In terms of assembly, heterohexadecamer of 8 large and 8 small subunits.

It localises to the plastid. The protein localises to the chloroplast. Its function is as follows. RuBisCO catalyzes two reactions: the carboxylation of D-ribulose 1,5-bisphosphate, the primary event in carbon dioxide fixation, as well as the oxidative fragmentation of the pentose substrate in the photorespiration process. Both reactions occur simultaneously and in competition at the same active site. Although the small subunit is not catalytic it is essential for maximal activity. Carbon dioxide and oxygen bind in the same pocket of the enzyme in a similar manner. The chain is Ribulose bisphosphate carboxylase small subunit from Galdieria sulphuraria (Red alga).